Consider the following 447-residue polypeptide: Cysteine--tRNA ligase (447 aa).

A Zn(2+)-binding site is contributed by Cys28. The short motif at 30–40 (PTVYNYIHIGN) is the 'HIGH' region element. The Zn(2+) site is built by Cys211, His236, and Glu240. A 'KMSKS' region motif is present at residues 268 to 272 (KMSKS). Lys271 lines the ATP pocket.

The protein belongs to the class-I aminoacyl-tRNA synthetase family. As to quaternary structure, monomer. Requires Zn(2+) as cofactor.

The protein localises to the cytoplasm. The enzyme catalyses tRNA(Cys) + L-cysteine + ATP = L-cysteinyl-tRNA(Cys) + AMP + diphosphate. The protein is Cysteine--tRNA ligase of Streptococcus pyogenes serotype M3 (strain ATCC BAA-595 / MGAS315).